We begin with the raw amino-acid sequence, 93 residues long: Putative membrane protein insertion efficiency factor (93 aa).

The protein belongs to the UPF0161 family.

The protein localises to the cell inner membrane. Its function is as follows. Could be involved in insertion of integral membrane proteins into the membrane. The protein is Putative membrane protein insertion efficiency factor of Cupriavidus taiwanensis (strain DSM 17343 / BCRC 17206 / CCUG 44338 / CIP 107171 / LMG 19424 / R1) (Ralstonia taiwanensis (strain LMG 19424)).